The following is a 917-amino-acid chain: Protein translocase subunit SecA 1 (917 aa).

ATP-binding positions include Q87, 105–109 (GEGKT), and D507. Residues 866–917 (EKSPESIGEDIEGREHPQKHQPFVRQGEKIGRNDPCPCGSGKKYKQCHGKLN) are disordered. Zn(2+)-binding residues include C901, C903, C912, and H913. Residues 907-917 (KKYKQCHGKLN) are compositionally biased toward basic residues.

This sequence belongs to the SecA family. As to quaternary structure, monomer and homodimer. Part of the essential Sec protein translocation apparatus which comprises SecA, SecYEG and auxiliary proteins SecDF-YajC and YidC. It depends on Zn(2+) as a cofactor.

The protein localises to the cell inner membrane. It is found in the cytoplasm. The catalysed reaction is ATP + H2O + cellular proteinSide 1 = ADP + phosphate + cellular proteinSide 2.. Part of the Sec protein translocase complex. Interacts with the SecYEG preprotein conducting channel. Has a central role in coupling the hydrolysis of ATP to the transfer of proteins into and across the cell membrane, serving both as a receptor for the preprotein-SecB complex and as an ATP-driven molecular motor driving the stepwise translocation of polypeptide chains across the membrane. This Nitrosospira multiformis (strain ATCC 25196 / NCIMB 11849 / C 71) protein is Protein translocase subunit SecA 1.